The following is a 352-amino-acid chain: Nicotinate-nucleotide--dimethylbenzimidazole phosphoribosyltransferase (352 aa).

Glu-318 serves as the catalytic Proton acceptor.

It belongs to the CobT family.

It catalyses the reaction 5,6-dimethylbenzimidazole + nicotinate beta-D-ribonucleotide = alpha-ribazole 5'-phosphate + nicotinate + H(+). It participates in nucleoside biosynthesis; alpha-ribazole biosynthesis; alpha-ribazole from 5,6-dimethylbenzimidazole: step 1/2. Its function is as follows. Catalyzes the synthesis of alpha-ribazole-5'-phosphate from nicotinate mononucleotide (NAMN) and 5,6-dimethylbenzimidazole (DMB). The protein is Nicotinate-nucleotide--dimethylbenzimidazole phosphoribosyltransferase of Dehalococcoides mccartyi (strain CBDB1).